We begin with the raw amino-acid sequence, 287 residues long: Putative B3 domain-containing protein Os08g0157700 (287 aa).

The segment covering 17–29 (ATEEEEEEEEEEQ) has biased composition (acidic residues). Residues 17-36 (ATEEEEEEEEEEQALGQEPA) are disordered. The TF-B3 DNA-binding region spans 71-168 (FDKVVTPSDV…RYFIDYRHCH (98 aa)).

The protein localises to the nucleus. This Oryza sativa subsp. japonica (Rice) protein is Putative B3 domain-containing protein Os08g0157700.